The following is a 257-amino-acid chain: UPF0246 protein Sputcn32_1053 (257 aa).

Belongs to the UPF0246 family.

The chain is UPF0246 protein Sputcn32_1053 from Shewanella putrefaciens (strain CN-32 / ATCC BAA-453).